The chain runs to 420 residues: Pre-mRNA-splicing factor RBM22 (420 aa).

The segment at 159 to 186 (RNRPHICSFWVKGECKRGEECPYRHEKP) adopts a C3H1-type zinc-finger fold. In terms of domain architecture, RRM spans 232–305 (TTLYVGGLGD…RRLNVKWGRS (74 aa)). Disordered stretches follow at residues 303–343 (GRSQ…AAEE) and 372–420 (APPP…HSSP). Basic and acidic residues predominate over residues 309–318 (RGKEKDKEGT).

This sequence belongs to the SLT11 family. As to quaternary structure, component of the pre-catalytic and catalytic spliceosome complexes. Component of the postcatalytic spliceosome P complex.

Its subcellular location is the nucleus. The protein localises to the cytoplasm. Required for pre-mRNA splicing as component of the activated spliceosome. Involved in the first step of pre-mRNA splicing. Binds directly to the internal stem-loop (ISL) domain of the U6 snRNA and to the pre-mRNA intron near the 5' splice site during the activation and catalytic phases of the spliceosome cycle. In Gallus gallus (Chicken), this protein is Pre-mRNA-splicing factor RBM22 (RBM22).